Consider the following 477-residue polypeptide: Glutamate--tRNA ligase (477 aa).

Positions 18-28 match the 'HIGH' region motif; sequence PSPTGFIHLGN. Residues 128–138 show a composition bias toward basic and acidic residues; it reads PRYDGSWRPEP. The segment at 128–151 is disordered; sequence PRYDGSWRPEPGKTLPPVPAGMSP. The short motif at 250-254 is the 'KMSKS' region element; sequence KLSKR. Lys253 provides a ligand contact to ATP.

This sequence belongs to the class-I aminoacyl-tRNA synthetase family. Glutamate--tRNA ligase type 1 subfamily. In terms of assembly, monomer.

It is found in the cytoplasm. The enzyme catalyses tRNA(Glu) + L-glutamate + ATP = L-glutamyl-tRNA(Glu) + AMP + diphosphate. Catalyzes the attachment of glutamate to tRNA(Glu) in a two-step reaction: glutamate is first activated by ATP to form Glu-AMP and then transferred to the acceptor end of tRNA(Glu). The sequence is that of Glutamate--tRNA ligase from Verminephrobacter eiseniae (strain EF01-2).